The sequence spans 604 residues: Solute carrier family 23 member 1 (604 aa).

The segment at 1–29 (MKAQEDPGSSKQHECPDSAGTSTRDQQAP) is disordered. Residues 1 to 59 (MKAQEDPGSSKQHECPDSAGTSTRDQQAPLPAEPKFDMLYKIEDVPPWYLCILLGFQHY) lie on the Cytoplasmic side of the membrane. A helical transmembrane segment spans residues 60 to 80 (LTCFSGTIAVPFLLAEALCVG). At 81–88 (RDQHMISQ) the chain is on the extracellular side. Residues 89–109 (LIGTIFTCVGITTLIQTTVGI) form a helical membrane-spanning segment. A topological domain (cytoplasmic) is located at residue arginine 110. A helical membrane pass occupies residues 111–131 (LPLFQASAFAFLVPAKAILAL). At 132–166 (ERWKCPPEEEIYGNWSMPLNTSHIWHPRIREVQGA) the chain is on the extracellular side. 2 N-linked (GlcNAc...) asparagine glycosylation sites follow: asparagine 145 and asparagine 151. Residues 167-187 (IMVSSVVEVVIGLLGLPGALL) form a helical membrane-spanning segment. The Cytoplasmic portion of the chain corresponds to 188 to 214 (SYIGPLTVTPTVSLIGLSVFQAAGDRA). A helical transmembrane segment spans residues 215–232 (GSHWGISACSILLIVLFS). The Extracellular segment spans residues 233-236 (QYLR). Positions 237–250 (NLTFLLPVYRWGKG) form an intramembrane region, helical. Over 251-257 (LTLFRIQ) the chain is Extracellular. Residues 258–278 (IFKMFPIVLAIMTVWLLCYVL) traverse the membrane as a helical segment. Residues 279–319 (TLTDVLPADPTVYGFQARTDARGDIMAISPWIRIPYPCQWG) are Cytoplasmic-facing. A helical membrane pass occupies residues 320 to 340 (LPTVTVAAVLGMFSATLAGII). Residues 341-365 (ESIGDYYACARLAGAPPPPVHAINR) lie on the Extracellular side of the membrane. The chain crosses the membrane as a helical span at residues 366–386 (GIFTEGVCCIIAGLLGTGNGS). The Cytoplasmic portion of the chain corresponds to 387–409 (TSSSPNIGVLGITKVGSRRVVQY). Residues 410–430 (GAGIMLILGAIGKFTALFASL) traverse the membrane as a helical segment. Over 431–433 (PDP) the chain is Extracellular. Residues 434-454 (ILGGMFCTLFGMITAVGLSNL) traverse the membrane as a helical segment. Residues 455 to 464 (QFVDMNSSRN) lie on the Cytoplasmic side of the membrane. Residues 465 to 485 (LFVLGFSMFFGLTLPNYLDSN) traverse the membrane as a helical segment. The Extracellular portion of the chain corresponds to 486–497 (PGAINTGVPEVD). Residues 498-518 (QILTVLLTTEMFVGGCLAFIL) form a helical membrane-spanning segment. Over 519-604 (DNTVPGSPEE…TETGSVCTKV (86 aa)) the chain is Cytoplasmic. Threonine 597 carries the phosphothreonine modification. Serine 599 bears the Phosphoserine mark. Threonine 602 carries the phosphothreonine modification.

Belongs to the nucleobase:cation symporter-2 (NCS2) (TC 2.A.40) family. In terms of processing, phosphorylated. Highly expressed in the straight segment of proximal tubules in the kidney, in intestine and liver. Detected in epithelial cells of the bronchiole and epididymis.

The protein resides in the cell membrane. It catalyses the reaction L-ascorbate(out) + 2 Na(+)(out) = L-ascorbate(in) + 2 Na(+)(in). It carries out the reaction urate(out) + 2 Na(+)(out) = urate(in) + 2 Na(+)(in). Functionally, sodium/ascorbate cotransporter. Mediates electrogenic uptake of vitamin C, with a stoichiometry of 2 Na(+) for each ascorbate. Has retained some ancestral activity toward nucleobases such as urate, an oxidized purine. Low-affinity high-capacity sodium:urate cotransporter, may regulate serum urate levels by serving as a renal urate re-absorber. In Rattus norvegicus (Rat), this protein is Solute carrier family 23 member 1 (Slc23a1).